A 130-amino-acid polypeptide reads, in one-letter code: uncharacterized protein (130 aa).

The tract at residues 1–28 (MELAKERNGPHQKHHGQCQNHCTSPNTV) is disordered. The segment covering 17–28 (QCQNHCTSPNTV) has biased composition (polar residues).

This is an uncharacterized protein from Saccharomyces cerevisiae (strain ATCC 204508 / S288c) (Baker's yeast).